Here is a 311-residue protein sequence, read N- to C-terminus: tRNA dimethylallyltransferase (311 aa).

10–17 (GPTAVGKS) is a binding site for ATP. 12-17 (TAVGKS) serves as a coordination point for substrate. Residues 35–38 (DSMQ) are interaction with substrate tRNA.

This sequence belongs to the IPP transferase family. As to quaternary structure, monomer. It depends on Mg(2+) as a cofactor.

It carries out the reaction adenosine(37) in tRNA + dimethylallyl diphosphate = N(6)-dimethylallyladenosine(37) in tRNA + diphosphate. In terms of biological role, catalyzes the transfer of a dimethylallyl group onto the adenine at position 37 in tRNAs that read codons beginning with uridine, leading to the formation of N6-(dimethylallyl)adenosine (i(6)A). The polypeptide is tRNA dimethylallyltransferase (Carboxydothermus hydrogenoformans (strain ATCC BAA-161 / DSM 6008 / Z-2901)).